The primary structure comprises 219 residues: MSTGESEGEQAERMAFILGLRQRGIRDVGVLRAMELVPRPLFVDPALRRHAYDDVALPIACGQTMSQPSLVAAMTEALSLTADHSVLEVGTGSGYHAAVLSHLAARVVTVDRYRSLVAEAQARFEVLGLRNVTAYVGDGTLGMPARAPFDRILVTAAAPDIPFALIDQLKFGGVIVMPLGAPEEIQTLVRYVKEQSGRTRTELMKVRFVPLIPGAAATL.

Residue Ser66 is part of the active site.

This sequence belongs to the methyltransferase superfamily. L-isoaspartyl/D-aspartyl protein methyltransferase family.

The protein resides in the cytoplasm. The catalysed reaction is [protein]-L-isoaspartate + S-adenosyl-L-methionine = [protein]-L-isoaspartate alpha-methyl ester + S-adenosyl-L-homocysteine. Functionally, catalyzes the methyl esterification of L-isoaspartyl residues in peptides and proteins that result from spontaneous decomposition of normal L-aspartyl and L-asparaginyl residues. It plays a role in the repair and/or degradation of damaged proteins. In Xanthobacter autotrophicus (strain ATCC BAA-1158 / Py2), this protein is Protein-L-isoaspartate O-methyltransferase.